The following is a 305-amino-acid chain: rRNA 2'-O-methyltransferase fibrillarin (305 aa).

Positions 1–70 (MAYTPGSRGG…SGGRGGAKGG (70 aa)) are disordered. Positions 7-69 (SRGGRGGSRG…SSGGRGGAKG (63 aa)) are enriched in gly residues. 2 positions are modified to phosphoserine: S111 and S114. Residues 160–161 (TS), 179–180 (EF), 204–205 (DA), and 224–227 (DVAQ) contribute to the S-adenosyl-L-methionine site.

It belongs to the methyltransferase superfamily. Fibrillarin family. In terms of assembly, component of box C/D small nucleolar ribonucleoprotein (snoRNP) particles. By homology to other fibrillarins, some or all of the N-terminal domain arginines are modified to asymmetric dimethylarginine (DMA).

It localises to the nucleus. The protein localises to the nucleolus. It carries out the reaction L-glutaminyl-[histone H2A] + S-adenosyl-L-methionine = N(5)-methyl-L-glutaminyl-[histone H2A] + S-adenosyl-L-homocysteine + H(+). Its function is as follows. S-adenosyl-L-methionine-dependent methyltransferase that has the ability to methylate both RNAs and proteins. Involved in pre-rRNA processing by catalyzing the site-specific 2'-hydroxyl methylation of ribose moieties in pre-ribosomal RNA. Site specificity is provided by a guide RNA that base pairs with the substrate. Methylation occurs at a characteristic distance from the sequence involved in base pairing with the guide RNA. Also acts as a protein methyltransferase by mediating methylation of 'Gln-105' of histone H2A (H2AQ105me), a modification that impairs binding of the FACT complex and is specifically present at 35S ribosomal DNA locus. The protein is rRNA 2'-O-methyltransferase fibrillarin (fib1) of Schizosaccharomyces pombe (strain 972 / ATCC 24843) (Fission yeast).